The primary structure comprises 122 residues: NADH-quinone oxidoreductase subunit A (122 aa).

3 helical membrane-spanning segments follow: residues 10–30 (MIVL…LTLG), 66–86 (IFAL…PWAV), and 91–111 (LGLF…VGLA).

This sequence belongs to the complex I subunit 3 family. In terms of assembly, NDH-1 is composed of 14 different subunits. Subunits NuoA, H, J, K, L, M, N constitute the membrane sector of the complex.

Its subcellular location is the cell membrane. It catalyses the reaction a quinone + NADH + 5 H(+)(in) = a quinol + NAD(+) + 4 H(+)(out). In terms of biological role, NDH-1 shuttles electrons from NADH, via FMN and iron-sulfur (Fe-S) centers, to quinones in the respiratory chain. The immediate electron acceptor for the enzyme in this species is believed to be a menaquinone. Couples the redox reaction to proton translocation (for every two electrons transferred, four hydrogen ions are translocated across the cytoplasmic membrane), and thus conserves the redox energy in a proton gradient. This chain is NADH-quinone oxidoreductase subunit A, found in Bacillus anthracis.